We begin with the raw amino-acid sequence, 469 residues long: tRNA (cytosine(72)-C(5))-methyltransferase NSUN6 (469 aa).

The PUA domain occupies Gln111–Tyr203. S-adenosyl-L-methionine-binding positions include Cys242–Lys248, Asp266, Asp293, and Asp323. The active-site Nucleophile is the Cys373. Lys419 is subject to N6-acetyllysine.

This sequence belongs to the class I-like SAM-binding methyltransferase superfamily. RsmB/NOP family.

It localises to the cytoplasm. It catalyses the reaction cytidine(72) in tRNA(Thr) + S-adenosyl-L-methionine = 5-methylcytidine(72) in tRNA(Thr) + S-adenosyl-L-homocysteine + H(+). The catalysed reaction is cytidine(72) in tRNA(Cys) + S-adenosyl-L-methionine = 5-methylcytidine(72) in tRNA(Cys) + S-adenosyl-L-homocysteine + H(+). Functionally, S-adenosyl-L-methionine-dependent methyltransferase that specifically methylates the C5 position of cytosine 72 in tRNA(Thr)(TGT) and tRNA(Cys)(GCA). In vitro also methylates tRNA(Thr)(AGT). Methylation requires, in the acceptor stem region, the presence of the 3'-CCA terminus, the target site C72, the discriminator base U73, and the second and third base pairs (2:71 and 3:70) in the tRNA substrates. The chain is tRNA (cytosine(72)-C(5))-methyltransferase NSUN6 from Homo sapiens (Human).